The primary structure comprises 148 residues: MATILVLHGPNLNLLGLREPGIYGATTLADINQTLSEMATKAGHHLQYLQSNAEYELIDRIHDARKEGVDFIIINPAAFTHTSVALRDALLGVDIPFIEVHLSNVHKREAFRHHSFFSDVAQGVICGFGATSYELALQAAFKILGTPV.

The active-site Proton acceptor is the Tyr23. Substrate contacts are provided by Asn75, His81, and Asp88. His101 (proton donor) is an active-site residue. Residues 102-103 (LS) and Arg112 each bind substrate.

This sequence belongs to the type-II 3-dehydroquinase family. Homododecamer.

It catalyses the reaction 3-dehydroquinate = 3-dehydroshikimate + H2O. The protein operates within metabolic intermediate biosynthesis; chorismate biosynthesis; chorismate from D-erythrose 4-phosphate and phosphoenolpyruvate: step 3/7. In terms of biological role, catalyzes a trans-dehydration via an enolate intermediate. This is 3-dehydroquinate dehydratase from Cellvibrio japonicus (strain Ueda107) (Pseudomonas fluorescens subsp. cellulosa).